Reading from the N-terminus, the 200-residue chain is Holliday junction branch migration complex subunit RuvA (200 aa).

A domain I region spans residues 1–64; sequence MIGQLTGLVG…EDAIQLFGFA (64 aa). A domain II region spans residues 65–143; the sequence is TTDERDWFRL…KMPGGGGTVS (79 aa). Residues 144–148 are flexible linker; it reads APGIV. Residues 149-200 are domain III; the sequence is SGPSVENDALLALAGLGFRRAEAWPVLSKVLAENENATLDLAIRLSLKDLAR.

The protein belongs to the RuvA family. As to quaternary structure, homotetramer. Forms an RuvA(8)-RuvB(12)-Holliday junction (HJ) complex. HJ DNA is sandwiched between 2 RuvA tetramers; dsDNA enters through RuvA and exits via RuvB. An RuvB hexamer assembles on each DNA strand where it exits the tetramer. Each RuvB hexamer is contacted by two RuvA subunits (via domain III) on 2 adjacent RuvB subunits; this complex drives branch migration. In the full resolvosome a probable DNA-RuvA(4)-RuvB(12)-RuvC(2) complex forms which resolves the HJ.

Its subcellular location is the cytoplasm. Its function is as follows. The RuvA-RuvB-RuvC complex processes Holliday junction (HJ) DNA during genetic recombination and DNA repair, while the RuvA-RuvB complex plays an important role in the rescue of blocked DNA replication forks via replication fork reversal (RFR). RuvA specifically binds to HJ cruciform DNA, conferring on it an open structure. The RuvB hexamer acts as an ATP-dependent pump, pulling dsDNA into and through the RuvAB complex. HJ branch migration allows RuvC to scan DNA until it finds its consensus sequence, where it cleaves and resolves the cruciform DNA. The protein is Holliday junction branch migration complex subunit RuvA of Gluconobacter oxydans (strain 621H) (Gluconobacter suboxydans).